A 160-amino-acid chain; its full sequence is Cyclic pyranopterin monophosphate synthase (160 aa).

Residues 77–79 (MCH) and 114–115 (ME) each bind substrate. Asp-129 is a catalytic residue.

The protein belongs to the MoaC family. Homohexamer; trimer of dimers.

The catalysed reaction is (8S)-3',8-cyclo-7,8-dihydroguanosine 5'-triphosphate = cyclic pyranopterin phosphate + diphosphate. It functions in the pathway cofactor biosynthesis; molybdopterin biosynthesis. Its function is as follows. Catalyzes the conversion of (8S)-3',8-cyclo-7,8-dihydroguanosine 5'-triphosphate to cyclic pyranopterin monophosphate (cPMP). The protein is Cyclic pyranopterin monophosphate synthase of Listeria monocytogenes serovar 1/2a (strain ATCC BAA-679 / EGD-e).